We begin with the raw amino-acid sequence, 169 residues long: 2-C-methyl-D-erythritol 2,4-cyclodiphosphate synthase (169 aa).

A divalent metal cation is bound by residues D13 and H15. 4-CDP-2-C-methyl-D-erythritol 2-phosphate is bound by residues 13-15 (DIH) and 40-41 (HS). A divalent metal cation is bound at residue H48. 4-CDP-2-C-methyl-D-erythritol 2-phosphate-binding positions include 62–64 (DIG), 138–141 (TTNE), and R148.

The protein belongs to the IspF family. Homotrimer. The cofactor is a divalent metal cation.

The catalysed reaction is 4-CDP-2-C-methyl-D-erythritol 2-phosphate = 2-C-methyl-D-erythritol 2,4-cyclic diphosphate + CMP. It participates in isoprenoid biosynthesis; isopentenyl diphosphate biosynthesis via DXP pathway; isopentenyl diphosphate from 1-deoxy-D-xylulose 5-phosphate: step 4/6. In terms of biological role, involved in the biosynthesis of isopentenyl diphosphate (IPP) and dimethylallyl diphosphate (DMAPP), two major building blocks of isoprenoid compounds. Catalyzes the conversion of 4-diphosphocytidyl-2-C-methyl-D-erythritol 2-phosphate (CDP-ME2P) to 2-C-methyl-D-erythritol 2,4-cyclodiphosphate (ME-CPP) with a corresponding release of cytidine 5-monophosphate (CMP). This Akkermansia muciniphila (strain ATCC BAA-835 / DSM 22959 / JCM 33894 / BCRC 81048 / CCUG 64013 / CIP 107961 / Muc) protein is 2-C-methyl-D-erythritol 2,4-cyclodiphosphate synthase.